We begin with the raw amino-acid sequence, 476 residues long: Eukaryotic translation initiation factor 3 subunit L (476 aa).

Positions 257 to 452 (DAIRMFSHIL…DLDYALEKDL (196 aa)) constitute a PCI domain.

The protein belongs to the eIF-3 subunit L family. As to quaternary structure, component of the eukaryotic translation initiation factor 3 (eIF-3) complex.

The protein resides in the cytoplasm. Component of the eukaryotic translation initiation factor 3 (eIF-3) complex, which is involved in protein synthesis of a specialized repertoire of mRNAs and, together with other initiation factors, stimulates binding of mRNA and methionyl-tRNAi to the 40S ribosome. The eIF-3 complex specifically targets and initiates translation of a subset of mRNAs involved in cell proliferation. This Aspergillus terreus (strain NIH 2624 / FGSC A1156) protein is Eukaryotic translation initiation factor 3 subunit L.